A 66-amino-acid polypeptide reads, in one-letter code: Large ribosomal subunit protein bL33c (66 aa).

It belongs to the bacterial ribosomal protein bL33 family.

Its subcellular location is the plastid. It localises to the chloroplast. The chain is Large ribosomal subunit protein bL33c from Aethionema grandiflorum (Persian stone-cress).